Consider the following 463-residue polypeptide: L-seryl-tRNA(Sec) selenium transferase (463 aa).

The residue at position 295 (K295) is an N6-(pyridoxal phosphate)lysine.

Belongs to the SelA family. As to quaternary structure, homodecamer; pentamer of dimers. Binds only one seryl-tRNA(Sec) per dimer. Requires pyridoxal 5'-phosphate as cofactor.

It localises to the cytoplasm. The enzyme catalyses L-seryl-tRNA(Sec) + selenophosphate + H(+) = L-selenocysteinyl-tRNA(Sec) + phosphate. It functions in the pathway aminoacyl-tRNA biosynthesis; selenocysteinyl-tRNA(Sec) biosynthesis; selenocysteinyl-tRNA(Sec) from L-seryl-tRNA(Sec) (bacterial route): step 1/1. In terms of biological role, converts seryl-tRNA(Sec) to selenocysteinyl-tRNA(Sec) required for selenoprotein biosynthesis. This is L-seryl-tRNA(Sec) selenium transferase from Shigella flexneri.